A 365-amino-acid polypeptide reads, in one-letter code: Flagellar P-ring protein (365 aa).

The signal sequence occupies residues 1–19 (MIKFLSALILLLVTTAAQA).

The protein belongs to the FlgI family. The basal body constitutes a major portion of the flagellar organelle and consists of four rings (L,P,S, and M) mounted on a central rod.

The protein resides in the periplasm. It is found in the bacterial flagellum basal body. In terms of biological role, assembles around the rod to form the L-ring and probably protects the motor/basal body from shearing forces during rotation. In Shigella boydii serotype 4 (strain Sb227), this protein is Flagellar P-ring protein.